Reading from the N-terminus, the 222-residue chain is UPF0758 protein YicR (222 aa).

In terms of domain architecture, MPN spans proline 100–isoleucine 222. Residues histidine 171, histidine 173, and aspartate 184 each coordinate Zn(2+). Residues histidine 171–aspartate 184 carry the JAMM motif motif.

The protein belongs to the UPF0758 family. YicR subfamily.

The sequence is that of UPF0758 protein YicR from Escherichia coli O9:H4 (strain HS).